The primary structure comprises 1113 residues: StAR-related lipid transfer protein 13 (1113 aa).

An N-acetylmethionine modification is found at methionine 1. In terms of domain architecture, SAM spans 55-122 (QQEIEAKEAC…LNKCASMRLD (68 aa)). Disordered regions lie at residues 164-218 (PVAD…HSAD), 230-256 (SSLP…RTRA), and 308-343 (NGDL…STVS). Residues 179–188 (NTASSESVLT) are compositionally biased toward polar residues. The segment covering 197 to 214 (SIHSESSGGSDSRSQSGH) has biased composition (low complexity). Positions 230 to 245 (SSLPQSTREGLNQSFH) are enriched in polar residues. Positions 322-340 (GLPCSSKSSGESSPLENSS) are enriched in low complexity. Serine 411 is subject to Phosphoserine. 2 stretches are compositionally biased toward polar residues: residues 421–435 (SNGV…SLGR) and 529–549 (PNQV…TTPS). 2 disordered regions span residues 421–443 (SNGV…GMRE) and 514–578 (HSTL…GASL). Residues 663-868 (VPLIVHVQRT…HMITECNRLF (206 aa)) form the Rho-GAP domain. One can recognise an START domain in the interval 899–1109 (LAESGATFHT…SFQPLVAEGP (211 aa)).

Homodimer. Interacts with TAX1BP1.

The protein resides in the cytoplasm. Its subcellular location is the membrane. It localises to the mitochondrion membrane. It is found in the lipid droplet. In terms of biological role, may function as a GTPase-activating protein. The polypeptide is StAR-related lipid transfer protein 13 (Stard13) (Mus musculus (Mouse)).